Reading from the N-terminus, the 310-residue chain is Protein N-terminal asparagine amidohydrolase (310 aa).

As to quaternary structure, monomer.

The protein localises to the cytoplasm. The catalysed reaction is N-terminal L-asparaginyl-[protein] + H2O + H(+) = N-terminal L-aspartyl-[protein] + NH4(+). With respect to regulation, inhibited by micromolar concentrations of copper and zinc ions. Functionally, N-terminal asparagine deamidase that mediates deamidation of N-terminal asparagine residues to aspartate. Required for the ubiquitin-dependent turnover of intracellular proteins that initiate with Met-Asn. These proteins are acetylated on the retained initiator methionine and can subsequently be modified by the removal of N-acetyl methionine by acylaminoacid hydrolase (AAH). Conversion of the resulting N-terminal asparagine to aspartate by NTAN1/PNAD renders the protein susceptible to arginylation, polyubiquitination and degradation as specified by the N-end rule. This enzyme does not act on substrates with internal or C-terminal asparagines and does not act on glutamine residues in any position, nor on acetylated N-terminal peptidyl Asn. This Homo sapiens (Human) protein is Protein N-terminal asparagine amidohydrolase (NTAN1).